Reading from the N-terminus, the 668-residue chain is Small ribosomal subunit protein mS81 (rPPR8) (668 aa).

A mitochondrion-targeting transit peptide spans 1-36; sequence MRYQQWRLMLLRSYHRSHLPYLSPCSQVTSISSRSF. PPR repeat units follow at residues 286 to 320, 321 to 355, 396 to 430, 431 to 465, 466 to 496, 502 to 537, and 543 to 577; these read DEKT…GYEV, EIET…SSSS, TDSL…GYVP, SGDM…GNNL, DDKA…MVGN, ADYS…QLKP, and KSLV…GFPP.

The protein belongs to the PPR family. P subfamily. As to quaternary structure, component of the mitochondrial ribosome small subunit.

Its subcellular location is the mitochondrion. The protein is Small ribosomal subunit protein mS81 (rPPR8) of Arabidopsis thaliana (Mouse-ear cress).